Here is a 224-residue protein sequence, read N- to C-terminus: Ribosomal RNA small subunit methyltransferase G (224 aa).

S-adenosyl-L-methionine is bound by residues Gly-89, Leu-94, 140 to 141 (IE), and Arg-154.

It belongs to the methyltransferase superfamily. RNA methyltransferase RsmG family.

The protein resides in the cytoplasm. It catalyses the reaction guanosine(527) in 16S rRNA + S-adenosyl-L-methionine = N(7)-methylguanosine(527) in 16S rRNA + S-adenosyl-L-homocysteine. In terms of biological role, specifically methylates the N7 position of guanine in position 527 of 16S rRNA. This is Ribosomal RNA small subunit methyltransferase G from Bordetella avium (strain 197N).